The following is a 107-amino-acid chain: Sperm-specific class P protein 34 (107 aa).

Positions 1-26 (MINVDPPTGNYPATGGNSTHNITSES) are disordered. The MSP domain maps to 1–107 (MINVDPPTGN…GEIIVKLIAA (107 aa)). Polar residues predominate over residues 15–25 (GGNSTHNITSE).

As to expression, expressed at higher level in testis.

In Caenorhabditis elegans, this protein is Sperm-specific class P protein 34 (ssp-34).